The following is a 569-amino-acid chain: Adenine deaminase (569 aa).

Belongs to the metallo-dependent hydrolases superfamily. Adenine deaminase family. The cofactor is Mn(2+).

It carries out the reaction adenine + H2O + H(+) = hypoxanthine + NH4(+). This chain is Adenine deaminase, found in Desulfitobacterium hafniense (strain Y51).